Consider the following 607-residue polypeptide: Probable Ufm1-specific protease 2 (607 aa).

Active-site residues include Cys-440, Asp-564, and His-566.

Belongs to the peptidase C78 family.

Its function is as follows. Thiol protease which recognizes and hydrolyzes the peptide bond at the C-terminal Gly of UFM1, a ubiquitin-like modifier protein bound to a number of target proteins. Does not hydrolyze SUMO1 or ISG15 ubiquitin-like proteins. This Drosophila melanogaster (Fruit fly) protein is Probable Ufm1-specific protease 2.